Reading from the N-terminus, the 304-residue chain is GTP cyclohydrolase FolE2 (304 aa).

Belongs to the GTP cyclohydrolase IV family.

It carries out the reaction GTP + H2O = 7,8-dihydroneopterin 3'-triphosphate + formate + H(+). It participates in cofactor biosynthesis; 7,8-dihydroneopterin triphosphate biosynthesis; 7,8-dihydroneopterin triphosphate from GTP: step 1/1. In terms of biological role, converts GTP to 7,8-dihydroneopterin triphosphate. This Bdellovibrio bacteriovorus (strain ATCC 15356 / DSM 50701 / NCIMB 9529 / HD100) protein is GTP cyclohydrolase FolE2.